The primary structure comprises 328 residues: Thiamine-monophosphate kinase (328 aa).

Mg(2+)-binding residues include Asp-30, Thr-45, Thr-46, and Asp-47. Position 54 (His-54) interacts with substrate. Positions 75 and 122 each coordinate Mg(2+). Residues 121-122 (GD) and Arg-146 contribute to the ATP site. Residue Asp-211 coordinates Mg(2+). ATP is bound at residue Ser-213. Position 214 (Asp-214) interacts with Mg(2+). Substrate-binding residues include Glu-262 and Phe-321.

This sequence belongs to the thiamine-monophosphate kinase family.

The catalysed reaction is thiamine phosphate + ATP = thiamine diphosphate + ADP. It participates in cofactor biosynthesis; thiamine diphosphate biosynthesis; thiamine diphosphate from thiamine phosphate: step 1/1. Its function is as follows. Catalyzes the ATP-dependent phosphorylation of thiamine-monophosphate (TMP) to form thiamine-pyrophosphate (TPP), the active form of vitamin B1. The protein is Thiamine-monophosphate kinase of Haemophilus influenzae (strain ATCC 51907 / DSM 11121 / KW20 / Rd).